The primary structure comprises 373 residues: Sorting nexin-21 (373 aa).

The tract at residues 1-107 (MHRGTQEGAM…RSPPPDGQWG (107 aa)) is disordered. Residues 21 to 37 (ALAGDGPGEAAASPEAE) are compositionally biased toward low complexity. A compositionally biased stretch (polar residues) spans 55-65 (SRLSGTLSFTS). Over residues 66–81 (AEDDEDDEDEDDEEAG) the composition is skewed to acidic residues. A PX domain is found at 129–246 (QRLLFEVTSA…DFFVLPELRR (118 aa)). A 1,2-diacyl-sn-glycero-3-phospho-(1D-myo-inositol-3-phosphate)-binding residues include Arg171, Ser173, Lys198, and Arg212.

This sequence belongs to the sorting nexin family. In terms of assembly, monomer. As to expression, highly expressed in fetus liver, but only weakly expressed in brain, skeleton muscle, smooth muscle, and cardiac muscle, kidney, and adrenal gland.

The protein resides in the cytoplasmic vesicle membrane. It localises to the early endosome membrane. In terms of biological role, binds to membranes enriched in phosphatidylinositol 3-phosphate (PtdIns(P3)) and phosphatidylinositol 4,5-bisphosphate. May be involved in several stages of intracellular trafficking. The polypeptide is Sorting nexin-21 (SNX21) (Homo sapiens (Human)).